A 454-amino-acid polypeptide reads, in one-letter code: Glutamyl-tRNA reductase (454 aa).

Substrate-binding positions include 49–52 (TCNR), serine 109, 114–116 (ETQ), and glutamine 120. Cysteine 50 acts as the Nucleophile in catalysis. An NADP(+)-binding site is contributed by 189-194 (GAGKMG).

It belongs to the glutamyl-tRNA reductase family. Homodimer.

The enzyme catalyses (S)-4-amino-5-oxopentanoate + tRNA(Glu) + NADP(+) = L-glutamyl-tRNA(Glu) + NADPH + H(+). The protein operates within porphyrin-containing compound metabolism; protoporphyrin-IX biosynthesis; 5-aminolevulinate from L-glutamyl-tRNA(Glu): step 1/2. Functionally, catalyzes the NADPH-dependent reduction of glutamyl-tRNA(Glu) to glutamate 1-semialdehyde (GSA). This Geobacillus kaustophilus (strain HTA426) protein is Glutamyl-tRNA reductase.